The chain runs to 159 residues: Phosphopantetheine adenylyltransferase (159 aa).

S9 serves as a coordination point for substrate. Residues 9 to 10 and H17 each bind ATP; that span reads SF. Substrate contacts are provided by K41, L73, and R87. Residues 88 to 90, E98, and 123 to 129 contribute to the ATP site; these read GLR and YSYVSSS.

It belongs to the bacterial CoaD family. As to quaternary structure, homohexamer. Mg(2+) serves as cofactor.

It localises to the cytoplasm. The catalysed reaction is (R)-4'-phosphopantetheine + ATP + H(+) = 3'-dephospho-CoA + diphosphate. It functions in the pathway cofactor biosynthesis; coenzyme A biosynthesis; CoA from (R)-pantothenate: step 4/5. In terms of biological role, reversibly transfers an adenylyl group from ATP to 4'-phosphopantetheine, yielding dephospho-CoA (dPCoA) and pyrophosphate. The polypeptide is Phosphopantetheine adenylyltransferase (Shouchella clausii (strain KSM-K16) (Alkalihalobacillus clausii)).